The sequence spans 730 residues: Diacylglycerol kinase alpha (730 aa).

2 consecutive EF-hand domains span residues 111-146 (RPED…MMRV) and 156-191 (ELRP…TVPL). Residues D124, D126, N128, E135, D169, D171, S173, S175, and E180 each contribute to the Ca(2+) site. 2 consecutive Phorbol-ester/DAG-type zinc fingers follow at residues 206-254 (NHIW…AQPC) and 270-320 (SHLW…GPEC). The region spanning 368 to 501 (SNTHPLLVFI…LDRWFLEVIP (134 aa)) is the DAGKc domain. N6-acetyllysine is present on K479.

It belongs to the eukaryotic diacylglycerol kinase family. In terms of assembly, monomer.

Its subcellular location is the cytoplasm. It is found in the cytosol. The catalysed reaction is a 1,2-diacyl-sn-glycerol + ATP = a 1,2-diacyl-sn-glycero-3-phosphate + ADP + H(+). It catalyses the reaction a 1-O-alkyl-sn-glycerol + ATP = a 1-O-alkyl-sn-glycero-3-phosphate + ADP + H(+). The enzyme catalyses 1-O-alkyl-2-acyl-sn-glycerol + ATP = 1-O-alkyl-2-acyl-sn-glycero-3-phosphate + ADP + H(+). It carries out the reaction 1,2-dihexadecanoyl-sn-glycerol + ATP = 1,2-dihexadecanoyl-sn-glycero-3-phosphate + ADP + H(+). The catalysed reaction is 1-hexadecanoyl-2-(9Z-octadecenoyl)-sn-glycerol + ATP = 1-hexadecanoyl-2-(9Z-octadecenoyl)-sn-glycero-3-phosphate + ADP + H(+). It catalyses the reaction 2-(9Z-octadecenoyl)-glycerol + ATP = 2-(9Z-octadecenoyl)-sn-glycero-3-phosphate + ADP + H(+). The enzyme catalyses 1,2-di-(9Z-octadecenoyl)-sn-glycerol + ATP = 1,2-di-(9Z-octadecenoyl)-sn-glycero-3-phosphate + ADP + H(+). It carries out the reaction 1-octadecanoyl-2-(5Z,8Z,11Z,14Z-eicosatetraenoyl)-sn-glycerol + ATP = 1-octadecanoyl-2-(5Z,8Z,11Z,14Z-eicosatetraenoyl)-sn-glycero-3-phosphate + ADP + H(+). The catalysed reaction is 1,2-didecanoyl-sn-glycerol + ATP = 1,2-didecanoyl-sn-glycero-3-phosphate + ADP + H(+). It catalyses the reaction 1-O-hexadecyl-2-acetyl-sn-glycerol + ATP = 1-O-hexadecyl-2-acetyl-sn-glycero-3-phosphate + ADP + H(+). The enzyme catalyses 1-O-hexadecyl-2-(5Z,8Z,11Z,14Z-eicosatetraenoyl)-sn-glycerol + ATP = 1-O-hexadecyl-2-(5Z,8Z,11Z,14Z-eicosatetraenoyl)-sn-glycero-3-phosphate + ADP + H(+). It carries out the reaction 1-O-hexadecyl-2-(9Z-octadecenoyl)-sn-glycerol + ATP = 1-O-hexadecyl-2-(9Z-octadecenoyl)-sn-glycero-3-phosphate + ADP + H(+). The catalysed reaction is 1-O-hexadecyl-sn-glycerol + ATP = 1-O-hexadecyl-sn-glycero-3-phosphate + ADP + H(+). The protein operates within lipid metabolism; glycerolipid metabolism. Its activity is regulated as follows. Stimulated by calcium and phosphatidylserine. In terms of biological role, diacylglycerol kinase that converts diacylglycerol/DAG into phosphatidic acid/phosphatidate/PA and regulates the respective levels of these two bioactive lipids. Thereby, acts as a central switch between the signaling pathways activated by these second messengers with different cellular targets and opposite effects in numerous biological processes. Also plays an important role in the biosynthesis of complex lipids. Can also phosphorylate 1-alkyl-2-acylglycerol in vitro as efficiently as diacylglycerol provided it contains an arachidonoyl group. Also involved in the production of alkyl-lysophosphatidic acid, another bioactive lipid, through the phosphorylation of 1-alkyl-2-acetyl glycerol. This is Diacylglycerol kinase alpha (Dgka) from Mus musculus (Mouse).